The sequence spans 651 residues: Acetyl-coenzyme A synthetase (651 aa).

CoA contacts are provided by residues R193–R196, T313, and N337. Residues G389–P391, D413–T418, D502, and R517 contribute to the ATP site. S525 provides a ligand contact to CoA. ATP is bound at residue R528. The Mg(2+) site is built by V539, H541, and V544. Residue R586 coordinates CoA. The residue at position 611 (K611) is an N6-acetyllysine.

It belongs to the ATP-dependent AMP-binding enzyme family. It depends on Mg(2+) as a cofactor. In terms of processing, acetylated. Deacetylation by the SIR2-homolog deacetylase activates the enzyme.

The enzyme catalyses acetate + ATP + CoA = acetyl-CoA + AMP + diphosphate. Functionally, catalyzes the conversion of acetate into acetyl-CoA (AcCoA), an essential intermediate at the junction of anabolic and catabolic pathways. AcsA undergoes a two-step reaction. In the first half reaction, AcsA combines acetate with ATP to form acetyl-adenylate (AcAMP) intermediate. In the second half reaction, it can then transfer the acetyl group from AcAMP to the sulfhydryl group of CoA, forming the product AcCoA. The protein is Acetyl-coenzyme A synthetase of Shewanella denitrificans (strain OS217 / ATCC BAA-1090 / DSM 15013).